A 436-amino-acid chain; its full sequence is Serine--tRNA ligase (436 aa).

241 to 243 (TSE) is an L-serine binding site. 272 to 274 (RAE) is an ATP binding site. Position 295 (Glu-295) interacts with L-serine. 359–362 (EISS) provides a ligand contact to ATP. Ser-395 contributes to the L-serine binding site.

This sequence belongs to the class-II aminoacyl-tRNA synthetase family. Type-1 seryl-tRNA synthetase subfamily. As to quaternary structure, homodimer. The tRNA molecule binds across the dimer.

It is found in the cytoplasm. The enzyme catalyses tRNA(Ser) + L-serine + ATP = L-seryl-tRNA(Ser) + AMP + diphosphate + H(+). It catalyses the reaction tRNA(Sec) + L-serine + ATP = L-seryl-tRNA(Sec) + AMP + diphosphate + H(+). Its pathway is aminoacyl-tRNA biosynthesis; selenocysteinyl-tRNA(Sec) biosynthesis; L-seryl-tRNA(Sec) from L-serine and tRNA(Sec): step 1/1. In terms of biological role, catalyzes the attachment of serine to tRNA(Ser). Is also able to aminoacylate tRNA(Sec) with serine, to form the misacylated tRNA L-seryl-tRNA(Sec), which will be further converted into selenocysteinyl-tRNA(Sec). The sequence is that of Serine--tRNA ligase from Beijerinckia indica subsp. indica (strain ATCC 9039 / DSM 1715 / NCIMB 8712).